The sequence spans 170 residues: Peptide deformylase (170 aa).

Fe cation is bound by residues cysteine 94 and histidine 136. Residue glutamate 137 is part of the active site. Histidine 140 provides a ligand contact to Fe cation.

It belongs to the polypeptide deformylase family. It depends on Fe(2+) as a cofactor.

It catalyses the reaction N-terminal N-formyl-L-methionyl-[peptide] + H2O = N-terminal L-methionyl-[peptide] + formate. Its function is as follows. Removes the formyl group from the N-terminal Met of newly synthesized proteins. Requires at least a dipeptide for an efficient rate of reaction. N-terminal L-methionine is a prerequisite for activity but the enzyme has broad specificity at other positions. This is Peptide deformylase from Stenotrophomonas maltophilia (strain R551-3).